Reading from the N-terminus, the 1274-residue chain is Regulator of telomere elongation helicase 1 (1274 aa).

The Helicase ATP-binding domain occupies 7–296 (NGVTVDFPFQ…ARVAQHGELQ (290 aa)). 42-49 (SPTGTGKT) lines the ATP pocket. Positions 145, 163, 172, and 207 each coordinate [4Fe-4S] cluster. A Nuclear localization signal motif is present at residues 151–167 (KKQESNHMQISLCRKKV). Positions 250–253 (DEAH) match the DEAH box motif. A Nuclear localization signal motif is present at residues 871-877 (QRGGKKK). 3 disordered regions span residues 982 to 1002 (NSLP…RREL), 1014 to 1038 (RQLD…SKGD), and 1143 to 1198 (ELPC…DDTI). Over residues 1186–1196 (QRPDQSARSDD) the composition is skewed to basic and acidic residues.

This sequence belongs to the helicase family. RAD3/XPD subfamily. In terms of assembly, interacts with TERF1. Interacts (via PIP-box) with PCNA; the interaction is direct and essential for suppressing telomere fragility. Interacts with MMS19; the interaction mediates the association of RTEL1 with the cytosolic iron-sulfur protein assembly (CIA) complex.

The protein localises to the nucleus. The catalysed reaction is ATP + H2O = ADP + phosphate + H(+). In terms of biological role, a probable ATP-dependent DNA helicase implicated in telomere-length regulation, DNA repair and the maintenance of genomic stability. Acts as an anti-recombinase to counteract toxic recombination and limit crossover during meiosis. Regulates meiotic recombination and crossover homeostasis by physically dissociating strand invasion events and thereby promotes noncrossover repair by meiotic synthesis dependent strand annealing (SDSA) as well as disassembly of D loop recombination intermediates. Also disassembles T loops and prevents telomere fragility by counteracting telomeric G4-DNA structures, which together ensure the dynamics and stability of the telomere. This Rattus norvegicus (Rat) protein is Regulator of telomere elongation helicase 1 (Rtel1).